The chain runs to 177 residues: ADP-ribosylation factor-like protein 17 (177 aa).

The N-myristoyl glycine moiety is linked to residue Gly2. GTP contacts are provided by residues 24–31, 67–71, and 125–128; these read SLDTAGKT, DVGSH, and LPHS.

The protein belongs to the small GTPase superfamily. Arf family.

It localises to the golgi apparatus. Functionally, GTP-binding protein that functions as an allosteric activator of the cholera toxin catalytic subunit, an ADP-ribosyltransferase. Involved in protein trafficking; may modulate vesicle budding and uncoating within the Golgi apparatus. The chain is ADP-ribosylation factor-like protein 17 (ARL17A) from Homo sapiens (Human).